A 118-amino-acid polypeptide reads, in one-letter code: Small ribosomal subunit protein uS13 (118 aa).

A disordered region spans residues 94–118 (SLPVRGQRTKTNARTRKGPRKPIKK).

This sequence belongs to the universal ribosomal protein uS13 family. In terms of assembly, part of the 30S ribosomal subunit. Forms a loose heterodimer with protein S19. Forms two bridges to the 50S subunit in the 70S ribosome.

In terms of biological role, located at the top of the head of the 30S subunit, it contacts several helices of the 16S rRNA. In the 70S ribosome it contacts the 23S rRNA (bridge B1a) and protein L5 of the 50S subunit (bridge B1b), connecting the 2 subunits; these bridges are implicated in subunit movement. Contacts the tRNAs in the A and P-sites. In Actinobacillus pleuropneumoniae serotype 5b (strain L20), this protein is Small ribosomal subunit protein uS13.